A 72-amino-acid polypeptide reads, in one-letter code: uncharacterized protein (72 aa).

This is an uncharacterized protein from Archaeoglobus fulgidus (strain ATCC 49558 / DSM 4304 / JCM 9628 / NBRC 100126 / VC-16).